A 217-amino-acid polypeptide reads, in one-letter code: Ribonuclease HII (217 aa).

Residues 27-216 form the RNase H type-2 domain; it reads SRVAGVDEAG…VKESIQEGVC (190 aa). A divalent metal cation is bound by residues Asp33, Glu34, and Asp126.

The protein belongs to the RNase HII family. Requires Mn(2+) as cofactor. Mg(2+) serves as cofactor.

Its subcellular location is the cytoplasm. It catalyses the reaction Endonucleolytic cleavage to 5'-phosphomonoester.. Endonuclease that specifically degrades the RNA of RNA-DNA hybrids. This is Ribonuclease HII from Chlamydia trachomatis serovar A (strain ATCC VR-571B / DSM 19440 / HAR-13).